The chain runs to 391 residues: Na(+)/H(+) antiporter NhaA (391 aa).

The next 11 helical transmembrane spans lie at 14–34 (AGGI…NSPL), 47–67 (FGMS…FLLI), 87–107 (IFPA…YVAF), 117–137 (GWAI…ALLG), 146–166 (VFLL…IALF), 171–191 (LSTM…MLNA), 205–225 (AILW…GVVI), 252–272 (VAFG…LEGV), 280–300 (MLPL…IFTF), 318–338 (FIHI…SIFI), and 356–376 (LGIL…LHFS).

It belongs to the NhaA Na(+)/H(+) (TC 2.A.33) antiporter family.

The protein localises to the cell inner membrane. It catalyses the reaction Na(+)(in) + 2 H(+)(out) = Na(+)(out) + 2 H(+)(in). Its function is as follows. Na(+)/H(+) antiporter that extrudes sodium in exchange for external protons. The chain is Na(+)/H(+) antiporter NhaA from Vibrio campbellii (strain ATCC BAA-1116).